Reading from the N-terminus, the 146-residue chain is uncharacterized protein (146 aa).

Disordered stretches follow at residues 1–33 (MATF…GSYR) and 50–70 (QHWR…SWEG).

This is an uncharacterized protein from Homo sapiens (Human).